A 772-amino-acid chain; its full sequence is Subtilisin-like protease SBT5.3 (772 aa).

Positions methionine 1–alanine 25 are cleaved as a signal peptide. Residues serine 31–histidine 116 enclose the Inhibitor I9 domain. The Peptidase S8 domain occupies serine 120–valine 628. Catalysis depends on aspartate 153, which acts as the Charge relay system. A glycan (N-linked (GlcNAc...) asparagine) is linked at asparagine 211. Catalysis depends on histidine 223, which acts as the Charge relay system. 3 N-linked (GlcNAc...) asparagine glycosylation sites follow: asparagine 246, asparagine 306, and asparagine 396. One can recognise a PA domain in the interval serine 398–isoleucine 480. Serine 561 serves as the catalytic Charge relay system. N-linked (GlcNAc...) asparagine glycosylation is found at asparagine 606, asparagine 651, asparagine 662, asparagine 684, and asparagine 725.

This sequence belongs to the peptidase S8 family. In terms of tissue distribution, expressed specifically at sites of lateral root emergence.

The protein resides in the secreted. The protein localises to the cell wall. In terms of biological role, serine protease. Has a substrate preference for the hydrophobic residues Phe and Ala and the basic residue Asp in the P1 position, and for Asp, Leu or Ala in the P1' position. May play a role in the degradation of structural proteins in the extracellular matrix of cells located above sites of lateral root formation and thus facilitate lateral root emergence. The sequence is that of Subtilisin-like protease SBT5.3 (AIR3) from Arabidopsis thaliana (Mouse-ear cress).